The sequence spans 38 residues: Conotoxin r7a (38 aa).

A propeptide spanning residues 1 to 5 is cleaved from the precursor; it reads APAKR. Trp6 carries the 6'-bromotryptophan modification. 4-carboxyglutamate occurs at positions 10 and 11. Disulfide bonds link Cys12-Cys26, Cys19-Cys30, and Cys25-Cys35. 6'-bromotryptophan is present on Trp15. 2 positions are modified to 4-carboxyglutamate: Glu20 and Glu31. Residue Trp38 is modified to 6'-bromotryptophan.

This sequence belongs to the conotoxin O2 superfamily. As to expression, expressed by the venom duct.

It is found in the secreted. Its function is as follows. Induces a sleep-like state in mice. In Conus radiatus (Rayed cone), this protein is Conotoxin r7a.